We begin with the raw amino-acid sequence, 391 residues long: Uroporphyrinogen decarboxylase, chloroplastic (391 aa).

Substrate contacts are provided by residues 71-75 (RQAGR), phenylalanine 90, serine 120, aspartate 121, tyrosine 198, serine 253, and histidine 368.

The protein belongs to the uroporphyrinogen decarboxylase family. In terms of assembly, homodimer.

It is found in the plastid. The protein localises to the chloroplast. It carries out the reaction uroporphyrinogen III + 4 H(+) = coproporphyrinogen III + 4 CO2. It participates in porphyrin-containing compound metabolism; protoporphyrin-IX biosynthesis; coproporphyrinogen-III from 5-aminolevulinate: step 4/4. Functionally, catalyzes the decarboxylation of four acetate groups of uroporphyrinogen-III to yield coproporphyrinogen-III. The polypeptide is Uroporphyrinogen decarboxylase, chloroplastic (DCUP) (Nicotiana tabacum (Common tobacco)).